A 460-amino-acid chain; its full sequence is Cysteine--tRNA ligase (460 aa).

A Zn(2+)-binding site is contributed by C28. Residues M30–H40 carry the 'HIGH' region motif. Positions 209, 234, and 238 each coordinate Zn(2+). The 'KMSKS' region motif lies at K266–S270. K269 contacts ATP.

The protein belongs to the class-I aminoacyl-tRNA synthetase family. As to quaternary structure, monomer. Zn(2+) serves as cofactor.

The protein localises to the cytoplasm. The enzyme catalyses tRNA(Cys) + L-cysteine + ATP = L-cysteinyl-tRNA(Cys) + AMP + diphosphate. This chain is Cysteine--tRNA ligase, found in Thioalkalivibrio sulfidiphilus (strain HL-EbGR7).